The primary structure comprises 1022 residues: Histone-lysine N-methyltransferase TRX1 (1022 aa).

The disordered stretch occupies residues 31–151 (SSAPCPLPKK…QRQGVHKEAA (121 aa)). Pro residues predominate over residues 65 to 78 (EGPPPSPATAPPML). The span at 127 to 139 (GGAERRGYFSEPK) shows a compositional bias: basic and acidic residues. A PWWP domain is found at 264 to 327 (PGDLVWAKLT…LKQAVPFLNG (64 aa)). Basic and acidic residues predominate over residues 367–393 (SMEKGSSDANSNKDVHSCDNLSEDKTA). Residues 367-399 (SMEKGSSDANSNKDVHSCDNLSEDKTAESGGDY) form a disordered region. The FYR N-terminal domain occupies 402-461 (MTPIELGNLRVSKLGRIVTDSDYFHNKKHIWPEGYTAFRKFRSVKDPHVVILYKMEVLRN). Residues 465 to 548 (KARPLFRVTS…SCLKYFENAG (84 aa)) enclose the FYR C-terminal domain. Residues 553–609 (GYRAVHVNWKDLDYCSVCDMDEEYEDNLFLQCDKCRMMVHARCYGELEPLNGVLWLC) form a Phorbol-ester/DAG-type zinc finger. PHD-type zinc fingers lie at residues 564–615 (LDYC…CRPE) and 677–744 (LLCS…KKHR). The extended PHD domain (ePHD) stretch occupies residues 620 to 744 (SPRCCLCPVT…RLLSYCKKHR (125 aa)). Residues 861-979 (RRLAFGKSRI…PWEELTYDYR (119 aa)) enclose the SET domain. A Zn(2+)-binding site is contributed by Cys943. Tyr978 lines the S-adenosyl-L-methionine pocket. Residues 985-1001 (QRLPCYCGFPKCRGVVN) form the Post-SET domain. Cys989, Cys991, and Cys996 together coordinate Zn(2+).

The protein belongs to the class V-like SAM-binding methyltransferase superfamily. Histone-lysine methyltransferase family. TRX/MLL subfamily. Interacts with EHD3. As to expression, expressed in leaf blades and panicles.

The protein localises to the nucleus. The enzyme catalyses L-lysyl(4)-[histone H3] + S-adenosyl-L-methionine = N(6)-methyl-L-lysyl(4)-[histone H3] + S-adenosyl-L-homocysteine + H(+). Its function is as follows. Possesses histone H3 methyltransferase activity in vitro. Methylates 'Lys-4' of histone H3. H3 'Lys-4' methylation represents a specific tag for epigenetic transcriptional activation. Functions as a receptor for the lipid messenger phosphatidylinositol 5-phosphate (PI5P), which negatively regulates its transcriptional activation activity. Involved in the regulation of flowering time and floral induction under long day (LD) conditions. Acts as an activator of flowering under LD conditions. May function through binding to EHD3, a repressor of GHD7. The protein is Histone-lysine N-methyltransferase TRX1 of Oryza sativa subsp. japonica (Rice).